A 59-amino-acid polypeptide reads, in one-letter code: Phycobilisome degradation protein NblA (59 aa).

It to chloroplast ycf18.

Functionally, involved in phycobilisome (PBS) degradation during nutrient deprivation. May mark the PBS for degradation by covalent association with PBS components or may disrupt the PBS via ionic interactions. This chain is Phycobilisome degradation protein NblA, found in Synechococcus elongatus (strain ATCC 33912 / PCC 7942 / FACHB-805) (Anacystis nidulans R2).